Reading from the N-terminus, the 179-residue chain is Protein GrpE (179 aa).

Residues 1–20 (MSEETKEEIKNEKVDEEVTE) are disordered.

This sequence belongs to the GrpE family. Homodimer.

The protein localises to the cytoplasm. Its function is as follows. Participates actively in the response to hyperosmotic and heat shock by preventing the aggregation of stress-denatured proteins, in association with DnaK and GrpE. It is the nucleotide exchange factor for DnaK and may function as a thermosensor. Unfolded proteins bind initially to DnaJ; upon interaction with the DnaJ-bound protein, DnaK hydrolyzes its bound ATP, resulting in the formation of a stable complex. GrpE releases ADP from DnaK; ATP binding to DnaK triggers the release of the substrate protein, thus completing the reaction cycle. Several rounds of ATP-dependent interactions between DnaJ, DnaK and GrpE are required for fully efficient folding. This chain is Protein GrpE, found in Lactococcus lactis subsp. cremoris (strain MG1363).